The sequence spans 126 residues: Small ribosomal subunit protein uS12 (126 aa).

The interval 1 to 29 is disordered; it reads MPTIQQLIRQPRAPKKRRSKSPALQKCPQ. 3-methylthioaspartic acid is present on D89.

The protein belongs to the universal ribosomal protein uS12 family. As to quaternary structure, part of the 30S ribosomal subunit. Contacts proteins S8 and S17. May interact with IF1 in the 30S initiation complex.

In terms of biological role, with S4 and S5 plays an important role in translational accuracy. Functionally, interacts with and stabilizes bases of the 16S rRNA that are involved in tRNA selection in the A site and with the mRNA backbone. Located at the interface of the 30S and 50S subunits, it traverses the body of the 30S subunit contacting proteins on the other side and probably holding the rRNA structure together. The combined cluster of proteins S8, S12 and S17 appears to hold together the shoulder and platform of the 30S subunit. The protein is Small ribosomal subunit protein uS12 of Protochlamydia amoebophila (strain UWE25).